The sequence spans 37 residues: uncharacterized protein (37 aa).

The helical transmembrane segment at 1–21 (MQDLEIFLSIFAFIFVFYFGA) threads the bilayer.

The protein localises to the endoplasmic reticulum membrane. This is an uncharacterized protein from Saccharomyces cerevisiae (strain ATCC 204508 / S288c) (Baker's yeast).